The primary structure comprises 402 residues: N-acetyllactosaminide beta-1,6-N-acetylglucosaminyl-transferase (402 aa).

The Cytoplasmic portion of the chain corresponds to 1-7 (MMGSWKH). The helical; Signal-anchor for type II membrane protein transmembrane segment at 8–23 (CLFSASLISALIFVFV) threads the bilayer. Over 24-400 (YNTELWENKR…QSETAIQPSW (377 aa)) the chain is Lumenal. The N-linked (GlcNAc...) asparagine glycan is linked to asparagine 41.

Belongs to the glycosyltransferase 14 family. Expressed in lens epithelium cells. In terms of tissue distribution, expressed in reticulocytes.

It localises to the golgi apparatus membrane. It carries out the reaction a beta-D-Gal-(1-&gt;4)-beta-D-GlcNAc-(1-&gt;3)-beta-D-Gal-(1-&gt;4)-beta-D-GlcNAc derivative + UDP-N-acetyl-alpha-D-glucosamine = a beta-D-Gal-(1-&gt;4)-beta-D-GlcNAc-(1-&gt;3)-[beta-D-GlcNAc-(1-&gt;6)]-beta-D-Gal-(1-&gt;4)-N-acetyl-beta-D-glucosaminyl derivative + UDP + H(+). Its pathway is protein modification; protein glycosylation. Its function is as follows. Branching enzyme that converts linear into branched poly-N-acetyllactosaminoglycans. Introduces the blood group I antigen during embryonic development. It is closely associated with the development and maturation of erythroid cells. In terms of biological role, determines the expression of the blood group I antigen in erythrocytes. This is N-acetyllactosaminide beta-1,6-N-acetylglucosaminyl-transferase (GCNT2) from Homo sapiens (Human).